The primary structure comprises 112 residues: Hydrogenase maturation factor HypA (112 aa).

A Ni(2+)-binding site is contributed by H2. Zn(2+)-binding residues include C72, C75, C88, and C91.

The protein belongs to the HypA/HybF family.

Functionally, involved in the maturation of [NiFe] hydrogenases. Required for nickel insertion into the metal center of the hydrogenase. In Francisella philomiragia subsp. philomiragia (strain ATCC 25017 / CCUG 19701 / FSC 153 / O#319-036), this protein is Hydrogenase maturation factor HypA.